The chain runs to 323 residues: Probable cell division protein WhiA (323 aa).

The H-T-H motif DNA-binding region spans 279 to 313 (TLKELGEMVSGGKISKSGINHRLRKLDEIAERLRA).

The protein belongs to the WhiA family.

Functionally, involved in cell division and chromosome segregation. The protein is Probable cell division protein WhiA of Anoxybacillus flavithermus (strain DSM 21510 / WK1).